Consider the following 235-residue polypeptide: MSKQLIYSGKAKDIYTTEDENLIISTYKDQATAFNGVKKEQIAGKGVLNNQISSFIFEKLNAAGVATHFVEKLSDTEQLNKKVKIIPLEVVLRNYTAGSFSKRFGVDEGIALETPIVEFYYKNDDLDDPFINDEHVKFLQIAGDQQIAYLKEETRRINELLKVWFAEIGLKLIDFKLEFGFDKDGKIILADEFSPDNCRLWDADGNHMDKDVFRRGLGELTDVYEIVWEKLQGLK.

Belongs to the SAICAR synthetase family.

The catalysed reaction is 5-amino-1-(5-phospho-D-ribosyl)imidazole-4-carboxylate + L-aspartate + ATP = (2S)-2-[5-amino-1-(5-phospho-beta-D-ribosyl)imidazole-4-carboxamido]succinate + ADP + phosphate + 2 H(+). It participates in purine metabolism; IMP biosynthesis via de novo pathway; 5-amino-1-(5-phospho-D-ribosyl)imidazole-4-carboxamide from 5-amino-1-(5-phospho-D-ribosyl)imidazole-4-carboxylate: step 1/2. The chain is Phosphoribosylaminoimidazole-succinocarboxamide synthase from Streptococcus pneumoniae serotype 19F (strain G54).